The chain runs to 365 residues: Crh-like protein ARB_03382 (365 aa).

The signal sequence occupies residues 1–25; that stretch reads MMASRRISVLSSLGLFACLLSPVVA. Over 26 to 302 the chain is Extracellular; sequence QTFTYCNPLE…RWRELPTAAK (277 aa). An intrachain disulfide couples C31 to C39. N48, N54, N63, and N77 each carry an N-linked (GlcNAc...) asparagine glycan. The 194-residue stretch at 50–243 folds into the GH16 domain; sequence TTYLNSSLNP…YEKTPYIMSV (194 aa). The active-site Nucleophile is E125. E129 (proton donor) is an active-site residue. E129 contacts chitin. Residues N147 and N168 are each glycosylated (N-linked (GlcNAc...) asparagine). The chitin site is built by R209 and W213. A helical transmembrane segment spans residues 303–323; that stretch reads IAIFASIGGLVILGMAIIAFC. The Cytoplasmic portion of the chain corresponds to 324-365; that stretch reads CVKQRRAGRREFSMENSKFVEDQNNVMAMRTQWNHKYKPVGS.

Belongs to the glycosyl hydrolase 16 family. CRH1 subfamily.

Its subcellular location is the membrane. The catalysed reaction is Random endo-hydrolysis of N-acetyl-beta-D-glucosaminide (1-&gt;4)-beta-linkages in chitin and chitodextrins.. Dual chitinase/transglycosylase that plays a role in cell wall architecture. Chitinase and transglycosylase activities are coupled. Required for the polysaccharide cross-linking at the septa and the cell wall. More specifically, transfers chitin to 1,6-beta-glucan in the cell wall. Plays an important role in fungal pathogenesis. Involved in cell wall assembly and regeneration, filamentation, and adherence to host cells. This chain is Crh-like protein ARB_03382, found in Arthroderma benhamiae (strain ATCC MYA-4681 / CBS 112371) (Trichophyton mentagrophytes).